A 299-amino-acid chain; its full sequence is Protein U23 (299 aa).

Residues 1–27 (MRKSEFNAKSCFLMIGICVFNLNSSSC) form the signal peptide. A helical membrane pass occupies residues 247–267 (LVIWICGISFVGAFIIVIVIL).

The protein localises to the host membrane. The chain is Protein U23 (U23) from Human herpesvirus 6B (strain Z29) (HHV-6 variant B).